The sequence spans 1005 residues: Regulator of telomere elongation helicase 1 homolog (1005 aa).

In terms of domain architecture, Helicase ATP-binding spans 7–322; that stretch reads AGIPVHFPFE…KEMLLELEKA (316 aa). 42 to 49 serves as a coordination point for ATP; that stretch reads SPTGTGKT. [4Fe-4S] cluster is bound by residues Cys-145, Cys-163, Cys-172, and Cys-208. The DEAH box motif lies at 251 to 254; sequence DEAH. A Phosphothreonine modification is found at Thr-876. Positions 893-917 are disordered; sequence NGPLKTEPSEPATTSSSFCPTPAQS.

The protein belongs to the helicase family. RAD3/XPD subfamily.

It localises to the nucleus. It catalyses the reaction ATP + H2O = ADP + phosphate + H(+). In terms of biological role, a probable ATP-dependent DNA helicase implicated in DNA repair and the maintenance of genomic stability. Acts as an anti-recombinase to counteract toxic recombination and limit crossover during meiosis. Regulates meiotic recombination and crossover homeostasis by physically dissociating strand invasion events and thereby promotes noncrossover repair by meiotic synthesis dependent strand annealing (SDSA) as well as disassembly of D loop recombination intermediates. The chain is Regulator of telomere elongation helicase 1 homolog from Drosophila virilis (Fruit fly).